Reading from the N-terminus, the 424-residue chain is Serine--tRNA ligase (424 aa).

An L-serine-binding site is contributed by threonine 229 to glutamate 231. ATP-binding positions include arginine 260–glutamate 262 and valine 276. L-serine is bound at residue glutamate 283. Glutamate 347–serine 350 provides a ligand contact to ATP. An L-serine-binding site is contributed by threonine 382.

This sequence belongs to the class-II aminoacyl-tRNA synthetase family. Type-1 seryl-tRNA synthetase subfamily. Homodimer. The tRNA molecule binds across the dimer.

It localises to the cytoplasm. The enzyme catalyses tRNA(Ser) + L-serine + ATP = L-seryl-tRNA(Ser) + AMP + diphosphate + H(+). It catalyses the reaction tRNA(Sec) + L-serine + ATP = L-seryl-tRNA(Sec) + AMP + diphosphate + H(+). It participates in aminoacyl-tRNA biosynthesis; selenocysteinyl-tRNA(Sec) biosynthesis; L-seryl-tRNA(Sec) from L-serine and tRNA(Sec): step 1/1. In terms of biological role, catalyzes the attachment of serine to tRNA(Ser). Is also able to aminoacylate tRNA(Sec) with serine, to form the misacylated tRNA L-seryl-tRNA(Sec), which will be further converted into selenocysteinyl-tRNA(Sec). The polypeptide is Serine--tRNA ligase (Rubrobacter xylanophilus (strain DSM 9941 / JCM 11954 / NBRC 16129 / PRD-1)).